Reading from the N-terminus, the 116-residue chain is Nitrogenase-stabilizing/protective protein NifW (116 aa).

This sequence belongs to the NifW family. As to quaternary structure, homotrimer; associates with NifD.

May protect the nitrogenase Fe-Mo protein from oxidative damage. The sequence is that of Nitrogenase-stabilizing/protective protein NifW from Rhodopseudomonas palustris (strain TIE-1).